Here is a 170-residue protein sequence, read N- to C-terminus: Transcriptional repressor NrdR (170 aa).

A zinc finger lies at 3–34 (CPFCRHPDSRVVDSRVTDDGTAIRRRRSCPEC). The region spanning 46–136 (LSVIKRSGVI…VYRGFESLED (91 aa)) is the ATP-cone domain. The interval 151–170 (ERSETVERGRPVPSRGVDDR) is disordered.

It belongs to the NrdR family. Requires Zn(2+) as cofactor.

Negatively regulates transcription of bacterial ribonucleotide reductase nrd genes and operons by binding to NrdR-boxes. The chain is Transcriptional repressor NrdR from Acidothermus cellulolyticus (strain ATCC 43068 / DSM 8971 / 11B).